A 201-amino-acid polypeptide reads, in one-letter code: Protein lin-7 homolog B (201 aa).

Positions 1-13 (MAALVEPLGLERE) match the Kinase interacting site motif. Positions 10–65 (LEREVSRAVELLERLQRSGELPPQKLQALQRVLQSRFCSAIREVYEQLYDTLDITG) constitute an L27 domain. Positions 93-175 (VVELPKTDEG…SVKLVVRYTP (83 aa)) constitute a PDZ domain.

It belongs to the lin-7 family. As to quaternary structure, forms a complex with CASK and CASKIN1. Component of the brain-specific heterotrimeric complex (LIN-10-LIN-2-LIN-7 complex) composed of at least APBA1, CASK, and LIN7, which associates with the motor protein KIF17 to transport vesicles along microtubules. Forms a heterotrimeric complex composed of MMP5, LIN7B and PATJ; the N-terminal L27 domain of PALS1 interacts with the L27 domain of PATJ and the C-terminal L27 domain of PALS1 interacts with the L27 domain of LIN7B. Forms a heterotrimeric complex with DLG1 and CASK via their L27 domains. Interacts with DLG4 and GRIN2B as well as CDH1 and CTNNB1, the channels KCNJ12/Kir2.2, KCNJ4/Kir2.3 and probably KCNJ2/Kir2.1 and SLC6A12/BGT-1 via its PDZ domain. The association of LIN7A with cadherin and beta-catenin is calcium-dependent, occurs at synaptic junctions and requires the actin cytoskeleton. Interacts with EGFR, ERBB2, ERBB3 and ERBB4 with both PDZ and KID domains. Interacts with ASIC3. Interacts with TOPK. Interacts with RTKN. Associates with KIF17 via APBA1. Interacts with APBA1. Interacts with MPP7. Interacts with DLG2. Interacts with DLG3.

It localises to the cell membrane. The protein resides in the basolateral cell membrane. The protein localises to the cell junction. Its subcellular location is the postsynaptic density membrane. It is found in the tight junction. Functionally, plays a role in establishing and maintaining the asymmetric distribution of channels and receptors at the plasma membrane of polarized cells. Forms membrane-associated multiprotein complexes that may regulate delivery and recycling of proteins to the correct membrane domains. The tripartite complex composed of LIN7 (LIN7A, LIN7B or LIN7C), CASK and APBA1 associates with the motor protein KIF17 to transport vesicles containing N-methyl-D-aspartate (NMDA) receptor subunit NR2B along microtubules. This complex may have the potential to couple synaptic vesicle exocytosis to cell adhesion in brain. Ensures the proper localization of GRIN2B (subunit 2B of the NMDA receptor) to neuronal postsynaptic density and may function in localizing synaptic vesicles at synapses where it is recruited by beta-catenin and cadherin. Required to localize Kir2 channels, GABA transporter (SLC6A12) and EGFR/ERBB1, ERBB2, ERBB3 and ERBB4 to the basolateral membrane of epithelial cells. May increase the amplitude of ASIC3 acid-evoked currents by stabilizing the channel at the cell surface. In Bos taurus (Bovine), this protein is Protein lin-7 homolog B (LIN7B).